A 222-amino-acid polypeptide reads, in one-letter code: Glutathione S-transferase A2 (222 aa).

Ala-2 carries the N-acetylalanine modification. The GST N-terminal domain occupies Gly-3–Gly-83. At Lys-4 the chain carries N6-succinyllysine. Residues Tyr-9, Lys-45, Gln-54 to Val-55, and Gln-67 to Thr-68 each bind glutathione. The 124-residue stretch at Asp-85–Leu-208 folds into the GST C-terminal domain.

It belongs to the GST superfamily. Alpha family. As to quaternary structure, homodimer. Heterodimer of GSTA1 and GSTA2. As to expression, expressed in the kidney.

The catalysed reaction is RX + glutathione = an S-substituted glutathione + a halide anion + H(+). In terms of biological role, catalyzes the conjugation of glutathione to a large variety of electrophilic compounds. The polypeptide is Glutathione S-transferase A2 (Gsta2) (Mus musculus (Mouse)).